The chain runs to 425 residues: Adenylosuccinate synthetase (425 aa).

GTP-binding positions include 12-18 and 40-42; these read GDEGKGK and GHT. Aspartate 13 serves as the catalytic Proton acceptor. The Mg(2+) site is built by aspartate 13 and glycine 40. IMP contacts are provided by residues 13–16, 38–41, threonine 130, arginine 144, glutamine 224, threonine 239, and arginine 301; these read DEGK and NAGH. Catalysis depends on histidine 41, which acts as the Proton donor. A substrate-binding site is contributed by 297-303; the sequence is TVSNRRR. GTP is bound by residues arginine 303, 329–331, and 411–413; these read KLD and STS.

The protein belongs to the adenylosuccinate synthetase family. In terms of assembly, homodimer. Requires Mg(2+) as cofactor.

It is found in the cytoplasm. The enzyme catalyses IMP + L-aspartate + GTP = N(6)-(1,2-dicarboxyethyl)-AMP + GDP + phosphate + 2 H(+). It functions in the pathway purine metabolism; AMP biosynthesis via de novo pathway; AMP from IMP: step 1/2. In terms of biological role, plays an important role in the de novo pathway of purine nucleotide biosynthesis. Catalyzes the first committed step in the biosynthesis of AMP from IMP. The polypeptide is Adenylosuccinate synthetase (Wolbachia sp. subsp. Drosophila simulans (strain wRi)).